The primary structure comprises 451 residues: uncharacterized protein (451 aa).

The protein to ORF5 in pFZ1.

This is an uncharacterized protein from Methanothermobacter thermautotrophicus (Methanobacterium thermoformicicum).